The sequence spans 207 residues: Outer-membrane lipoprotein carrier protein (207 aa).

The N-terminal stretch at 1-21 (MRAIRMLLVSALTLGSVTAYA) is a signal peptide.

The protein belongs to the LolA family. As to quaternary structure, monomer.

It is found in the periplasm. Participates in the translocation of lipoproteins from the inner membrane to the outer membrane. Only forms a complex with a lipoprotein if the residue after the N-terminal Cys is not an aspartate (The Asp acts as a targeting signal to indicate that the lipoprotein should stay in the inner membrane). The sequence is that of Outer-membrane lipoprotein carrier protein from Pseudomonas putida (strain ATCC 47054 / DSM 6125 / CFBP 8728 / NCIMB 11950 / KT2440).